The following is a 317-amino-acid chain: Lipoyl synthase (317 aa).

Positions 59, 64, 70, 85, 89, 92, and 298 each coordinate [4Fe-4S] cluster. The region spanning Trp71 to Leu287 is the Radical SAM core domain.

It belongs to the radical SAM superfamily. Lipoyl synthase family. [4Fe-4S] cluster serves as cofactor.

It localises to the cytoplasm. It catalyses the reaction [[Fe-S] cluster scaffold protein carrying a second [4Fe-4S](2+) cluster] + N(6)-octanoyl-L-lysyl-[protein] + 2 oxidized [2Fe-2S]-[ferredoxin] + 2 S-adenosyl-L-methionine + 4 H(+) = [[Fe-S] cluster scaffold protein] + N(6)-[(R)-dihydrolipoyl]-L-lysyl-[protein] + 4 Fe(3+) + 2 hydrogen sulfide + 2 5'-deoxyadenosine + 2 L-methionine + 2 reduced [2Fe-2S]-[ferredoxin]. It functions in the pathway protein modification; protein lipoylation via endogenous pathway; protein N(6)-(lipoyl)lysine from octanoyl-[acyl-carrier-protein]: step 2/2. Functionally, catalyzes the radical-mediated insertion of two sulfur atoms into the C-6 and C-8 positions of the octanoyl moiety bound to the lipoyl domains of lipoate-dependent enzymes, thereby converting the octanoylated domains into lipoylated derivatives. The polypeptide is Lipoyl synthase (Bartonella bacilliformis (strain ATCC 35685 / KC583 / Herrer 020/F12,63)).